We begin with the raw amino-acid sequence, 363 residues long: Protein-glutamate methylesterase/protein-glutamine glutaminase 2 (363 aa).

A Response regulatory domain is found at 7–124 (RVLVVDDSAL…SLTLENVADE (118 aa)). A 4-aspartylphosphate modification is found at D58. The 198-residue stretch at 160-357 (PVASRTTPSK…NLLMVQSAAQ (198 aa)) folds into the CheB-type methylesterase domain. Residues S176, H203, and D299 contribute to the active site.

It belongs to the CheB family. In terms of processing, phosphorylated by CheA. Phosphorylation of the N-terminal regulatory domain activates the methylesterase activity.

It is found in the cytoplasm. It carries out the reaction [protein]-L-glutamate 5-O-methyl ester + H2O = L-glutamyl-[protein] + methanol + H(+). The enzyme catalyses L-glutaminyl-[protein] + H2O = L-glutamyl-[protein] + NH4(+). In terms of biological role, involved in chemotaxis. Part of a chemotaxis signal transduction system that modulates chemotaxis in response to various stimuli. Catalyzes the demethylation of specific methylglutamate residues introduced into the chemoreceptors (methyl-accepting chemotaxis proteins or MCP) by CheR. Also mediates the irreversible deamidation of specific glutamine residues to glutamic acid. In Koribacter versatilis (strain Ellin345), this protein is Protein-glutamate methylesterase/protein-glutamine glutaminase 2.